The sequence spans 279 residues: Cytochrome c1 (279 aa).

The N-terminal stretch at 1-21 (MKKLLISAVSALVLGSGAAFA) is a signal peptide. 4 residues coordinate heme c: C55, C58, H59, and M204. Residues 248 to 266 (MGLVAMVMLGLLSVMLYLT) form a helical membrane-spanning segment.

As to quaternary structure, the main subunits of complex b-c1 are: cytochrome b, cytochrome c1 and the Rieske protein. Binds 1 heme c group covalently per subunit.

It localises to the cell membrane. Component of the ubiquinol-cytochrome c reductase complex (complex III or cytochrome b-c1 complex), which is a respiratory chain that generates an electrochemical potential coupled to ATP synthesis. c1 functions as an electron donor to cytochrome c. The protein is Cytochrome c1 (petC) of Rhodobacter capsulatus (strain ATCC BAA-309 / NBRC 16581 / SB1003).